The chain runs to 70 residues: Small ribosomal subunit protein bS21 (70 aa).

This sequence belongs to the bacterial ribosomal protein bS21 family.

The sequence is that of Small ribosomal subunit protein bS21 from Sulfurimonas denitrificans (strain ATCC 33889 / DSM 1251) (Thiomicrospira denitrificans (strain ATCC 33889 / DSM 1251)).